Consider the following 750-residue polypeptide: Coiled-coil domain-containing protein 142 (750 aa).

The segment at 1-29 (MAQASRSGSLPPLVIVPPLRAQPGGTGEE) is disordered. The stretch at 87–110 (ALQRLRAVLLRLHREREQLLQARD) forms a coiled coil. Residues 687–714 (LEPPLQPGTSPAQTGQLQSTLGGRGPSP) are disordered. Polar residues predominate over residues 693–707 (PGTSPAQTGQLQSTL).

The chain is Coiled-coil domain-containing protein 142 (CCDC142) from Homo sapiens (Human).